Reading from the N-terminus, the 351-residue chain is UDP-glucose 4-epimerase 5 (351 aa).

Residues 13–15, 34–38, 64–65, Phe-86, and Lys-90 each bind NAD(+); these read GYI, DNLDN, and DL. 130 to 132 lines the substrate pocket; that stretch reads SAT. Tyr-154 functions as the Proton acceptor in the catalytic mechanism. Residues Lys-158 and Tyr-182 each contribute to the NAD(+) site. Substrate-binding positions include 182–184, 203–205, 221–223, Arg-236, and 298–301; these read YFN, NNL, TVF, and RPGD.

The protein belongs to the NAD(P)-dependent epimerase/dehydratase family. In terms of assembly, forms homodimers and heterodimers. NAD(+) is required as a cofactor. As to expression, widely expressed.

The enzyme catalyses UDP-alpha-D-glucose = UDP-alpha-D-galactose. It participates in carbohydrate metabolism; galactose metabolism. With respect to regulation, enhanced activity by NaCl. Inhibited by UDP. Functionally, catalyzes the interconversion between UDP-glucose and UDP-galactose. The protein is UDP-glucose 4-epimerase 5 of Arabidopsis thaliana (Mouse-ear cress).